We begin with the raw amino-acid sequence, 41 residues long: Entericidin A (41 aa).

The N-terminal stretch at 1–18 (MMKRLIVLVLLASTLLTG) is a signal peptide. Cys-19 is lipidated: N-palmitoyl cysteine. Cys-19 carries the S-diacylglycerol cysteine lipid modification.

It belongs to the EcnA/EcnB lipoprotein family.

It localises to the cell membrane. In terms of biological role, acts as antidote to the effect of entericidin B. This is Entericidin A (ecnA) from Escherichia coli O157:H7.